Reading from the N-terminus, the 101-residue chain is Urease subunit beta (101 aa).

This sequence belongs to the urease beta subunit family. Heterotrimer of UreA (gamma), UreB (beta) and UreC (alpha) subunits. Three heterotrimers associate to form the active enzyme.

Its subcellular location is the cytoplasm. It catalyses the reaction urea + 2 H2O + H(+) = hydrogencarbonate + 2 NH4(+). The protein operates within nitrogen metabolism; urea degradation; CO(2) and NH(3) from urea (urease route): step 1/1. The chain is Urease subunit beta from Burkholderia ambifaria (strain ATCC BAA-244 / DSM 16087 / CCUG 44356 / LMG 19182 / AMMD) (Burkholderia cepacia (strain AMMD)).